The primary structure comprises 249 residues: Cytoplasmic envelopment protein 1 (249 aa).

It belongs to the herpesviridae cytoplasmic envelopment protein 1 family.

The protein resides in the virion. The protein localises to the virion tegument. Its subcellular location is the host cytoplasm. It localises to the host Golgi apparatus. Plays a critical role in cytoplasmic virus egress. Participates in the final step of tegumentation and envelope acquisition within the host cytoplasm. The polypeptide is Cytoplasmic envelopment protein 1 (U75) (Human herpesvirus 6A (strain Uganda-1102) (HHV-6 variant A)).